The primary structure comprises 149 residues: MQVILLDKVANLGSLGDQVNVKAGYARNFLVPQGKAVPATKKNVEYFEARRAELEAKLADVLAAANARAEKINALETVTIASKAGDEGKLFGSIGTRDIADAVTAAGVDVAKSEVRLPNGVLRTTGEHEVNFQVHSEVFAKVIINVVAE.

The protein belongs to the bacterial ribosomal protein bL9 family.

Its function is as follows. Binds to the 23S rRNA. This Salmonella agona (strain SL483) protein is Large ribosomal subunit protein bL9.